We begin with the raw amino-acid sequence, 159 residues long: Large ribosomal subunit protein uL11 (159 aa).

A compositionally biased stretch (basic and acidic residues) spans 137-149; that stretch reads EGKDPREVQREVD. The tract at residues 137-159 is disordered; sequence EGKDPREVQREVDSGAWDKLLGG.

Belongs to the universal ribosomal protein uL11 family. Part of the ribosomal stalk of the 50S ribosomal subunit. Interacts with L10 and the large rRNA to form the base of the stalk. L10 forms an elongated spine to which L12 dimers bind in a sequential fashion forming a multimeric L10(L12)X complex.

Forms part of the ribosomal stalk which helps the ribosome interact with GTP-bound translation factors. The sequence is that of Large ribosomal subunit protein uL11 from Korarchaeum cryptofilum (strain OPF8).